The primary structure comprises 101 residues: YcgL domain-containing protein ACIAD2309 (101 aa).

Positions 1 to 93 (MHCDIYRSSK…PPEGFINPSD (93 aa)) constitute a YcgL domain.

The chain is YcgL domain-containing protein ACIAD2309 from Acinetobacter baylyi (strain ATCC 33305 / BD413 / ADP1).